The sequence spans 227 residues: Glutathione S-transferase U13 (227 aa).

A GST N-terminal domain is found at 5–86 (DTVKLIGSWS…YVDEAWPSVP (82 aa)). Glutathione-binding positions include 15 to 16 (SP), 43 to 44 (EK), 57 to 58 (KV), and 70 to 71 (ES). One can recognise a GST C-terminal domain in the interval 92–224 (DAYDRASARF…EVVAFAKQKF (133 aa)). A Phosphothreonine modification is found at T158.

This sequence belongs to the GST superfamily. Tau family.

It is found in the cytoplasm. The protein localises to the cytosol. It carries out the reaction RX + glutathione = an S-substituted glutathione + a halide anion + H(+). Functionally, in vitro, possesses glutathione S-transferase activity toward 1-chloro-2,4-dinitrobenzene (CDNB) and benzyl isothiocyanate (BITC). May be involved in the conjugation of reduced glutathione to a wide number of exogenous and endogenous hydrophobic electrophiles and have a detoxification role against certain herbicides. The chain is Glutathione S-transferase U13 (GSTU13) from Arabidopsis thaliana (Mouse-ear cress).